The sequence spans 472 residues: Argininosuccinate lyase (472 aa).

Belongs to the lyase 1 family. Argininosuccinate lyase subfamily.

The protein resides in the cytoplasm. It catalyses the reaction 2-(N(omega)-L-arginino)succinate = fumarate + L-arginine. It participates in amino-acid biosynthesis; L-arginine biosynthesis; L-arginine from L-ornithine and carbamoyl phosphate: step 3/3. This Mycolicibacterium paratuberculosis (strain ATCC BAA-968 / K-10) (Mycobacterium paratuberculosis) protein is Argininosuccinate lyase.